Reading from the N-terminus, the 50-residue chain is Protein HokE (50 aa).

The helical transmembrane segment at 5 to 25 (YALVAVIVLCLTVLGFTLLVG) threads the bilayer.

Belongs to the Hok/Gef family.

It is found in the cell inner membrane. Functionally, toxic component of a type I toxin-antitoxin (TA) system. When overexpressed kills cells within minutes; causes collapse of the transmembrane potential and arrest of respiration. Its toxic effect is probably neutralized by an antisense antitoxin Sok RNA. In Escherichia coli O157:H7, this protein is Protein HokE (hokE).